A 494-amino-acid polypeptide reads, in one-letter code: Cytochrome P450 2C23 (494 aa).

Position 131 is a phosphoserine (serine 131). Residues lysine 253 and lysine 379 each carry the N6-acetyllysine modification. Position 439 (cysteine 439) interacts with heme.

It belongs to the cytochrome P450 family. Heme is required as a cofactor. As to expression, expressed in kidney and liver. Expressed in cortical tubules of kidney (at protein level).

It is found in the endoplasmic reticulum membrane. It localises to the microsome membrane. The enzyme catalyses (5Z,8Z,11Z,14Z)-eicosatetraenoate + reduced [NADPH--hemoprotein reductase] + O2 = (8R,9S)-epoxy-(5Z,11Z,14Z)-eicosatrienoate + oxidized [NADPH--hemoprotein reductase] + H2O + H(+). It catalyses the reaction (5Z,8Z,11Z,14Z)-eicosatetraenoate + reduced [NADPH--hemoprotein reductase] + O2 = (11R,12S)-epoxy-(5Z,8Z,14Z)-eicosatrienoate + oxidized [NADPH--hemoprotein reductase] + H2O + H(+). The catalysed reaction is (5Z,8Z,11Z,14Z)-eicosatetraenoate + reduced [NADPH--hemoprotein reductase] + O2 = (11S,12R)-epoxy-(5Z,8Z,14Z)-eicosatrienoate + oxidized [NADPH--hemoprotein reductase] + H2O + H(+). It carries out the reaction (5Z,8Z,11Z,14Z)-eicosatetraenoate + reduced [NADPH--hemoprotein reductase] + O2 = (14R,15S)-epoxy-(5Z,8Z,11Z)-eicosatrienoate + oxidized [NADPH--hemoprotein reductase] + H2O + H(+). The enzyme catalyses (5Z,8Z,11Z,14Z)-eicosatetraenoate + reduced [NADPH--hemoprotein reductase] + O2 = (14S,15R)-epoxy-(5Z,8Z,11Z)-eicosatrienoate + oxidized [NADPH--hemoprotein reductase] + H2O + H(+). It catalyses the reaction (5Z,8Z,11Z,14Z,17Z)-eicosapentaenoate + reduced [NADPH--hemoprotein reductase] + O2 = 8,9-epoxy-(5Z,11Z,14Z,17Z)-eicosatetraenoate + oxidized [NADPH--hemoprotein reductase] + H2O + H(+). The catalysed reaction is (5Z,8Z,11Z,14Z,17Z)-eicosapentaenoate + reduced [NADPH--hemoprotein reductase] + O2 = 11,12-epoxy-(5Z,8Z,14Z,17Z)-eicosatetraenoate + oxidized [NADPH--hemoprotein reductase] + H2O + H(+). It carries out the reaction (5Z,8Z,11Z,14Z,17Z)-eicosapentaenoate + reduced [NADPH--hemoprotein reductase] + O2 = 14,15-epoxy-(5Z,8Z,11Z,17Z)-eicosatetraenoate + oxidized [NADPH--hemoprotein reductase] + H2O + H(+). The enzyme catalyses (5Z,8Z,11Z,14Z,17Z)-eicosapentaenoate + reduced [NADPH--hemoprotein reductase] + O2 = (17R,18S)-epoxy-(5Z,8Z,11Z,14Z)-eicosatetraenoate + oxidized [NADPH--hemoprotein reductase] + H2O + H(+). It catalyses the reaction (5Z,8Z,11Z,14Z,17Z)-eicosapentaenoate + reduced [NADPH--hemoprotein reductase] + O2 = (17S,18R)-epoxy-(5Z,8Z,11Z,14Z)-eicosatetraenoate + oxidized [NADPH--hemoprotein reductase] + H2O + H(+). The catalysed reaction is 20-hydroxy-(5Z,8Z,11Z,14Z)-eicosatetraenoate + reduced [NADPH--hemoprotein reductase] + O2 = 20-hydroxy-8,9-epoxy-(5Z,11Z,14Z)-eicosatrienoate + oxidized [NADPH--hemoprotein reductase] + H2O + H(+). It functions in the pathway lipid metabolism; arachidonate metabolism. Functionally, a cytochrome P450 monooxygenase involved in polyunsaturated fatty acids (PUFAs) metabolism and signaling. Catalyzes preferentially the epoxidation of double bonds of PUFAs. Converts arachidonic acid (ARA, C20:4(n-6)) primarily to stereospecific products 8R,9S-, 11R,12S-, and 14S,15R-EET. Plays a major role in the formation of EETs and hydroxy-EETs (HEETs) in kidney. Via EETs may inhibit the epithelial sodium channels (ENaCs) in nephron segments, preventing excessive sodium absorption during high dietary salt intake. Participates in the formation of anti-inflammatory hydroxyepoxyeicosatrienoic acids (HEETs) by converting 20-hydroxyeicosatetraenoic acid (20-HETE) to 20,8,9-HEET, an activator of PPARA. Metabolizes eicosapentaenoic acid (EPA, C20:5(n-3)) to epoxyeicosatetraenoic acid (EETeTr) regioisomers, 8,9-, 11,12-, 14,15-, and 17,18-EETeTr, preferentially producing 17R,18S enantiomer. Mechanistically, uses molecular oxygen inserting one oxygen atom into a substrate, and reducing the second into a water molecule, with two electrons provided by NADPH via cytochrome P450 reductase (NADPH--hemoprotein reductase). This is Cytochrome P450 2C23 from Rattus norvegicus (Rat).